Consider the following 102-residue polypeptide: Small ribosomal subunit protein uS10 (102 aa).

Belongs to the universal ribosomal protein uS10 family. In terms of assembly, part of the 30S ribosomal subunit.

Involved in the binding of tRNA to the ribosomes. This chain is Small ribosomal subunit protein uS10, found in Thermoanaerobacter pseudethanolicus (strain ATCC 33223 / 39E) (Clostridium thermohydrosulfuricum).